The following is a 600-amino-acid chain: Gamma-terpinene synthase, chloroplastic (600 aa).

A chloroplast-targeting transit peptide spans 1 to 40 (MALNLLSSLPAACNFTRLSLPLSSKVNGFVPPITQVQYPM). Mg(2+) is bound by residues Asp-353, Asp-357, Asp-498, and Glu-506. Positions 353 to 357 (DDVYD) match the DDXXD motif motif.

Belongs to the terpene synthase family. It depends on Mn(2+) as a cofactor. Mg(2+) is required as a cofactor.

Its subcellular location is the plastid. The protein localises to the chloroplast. It catalyses the reaction (2E)-geranyl diphosphate = gamma-terpinene + diphosphate. It functions in the pathway secondary metabolite biosynthesis; terpenoid biosynthesis. Inhibited by 100 mM KCl. Its function is as follows. Monoterpene synthase which catalyzes the conversion of geranyl diphosphate to gamma-terpinene and the minor products limonene, alpha-pinene, beta-pinene, alpha-terpinolene, alpha-thujene, alpha-terpinene, myrcene and sabinene. This Citrus limon (Lemon) protein is Gamma-terpinene synthase, chloroplastic.